The following is a 175-amino-acid chain: Translation initiation factor IF-3 (175 aa).

It belongs to the IF-3 family. Monomer.

It is found in the cytoplasm. Functionally, IF-3 binds to the 30S ribosomal subunit and shifts the equilibrium between 70S ribosomes and their 50S and 30S subunits in favor of the free subunits, thus enhancing the availability of 30S subunits on which protein synthesis initiation begins. The polypeptide is Translation initiation factor IF-3 (Staphylococcus aureus (strain USA300)).